A 63-amino-acid polypeptide reads, in one-letter code: Sarcotoxin-1A (63 aa).

An N-terminal signal peptide occupies residues 1-23; it reads MNFQNIFIFVALILAVFAGQSQA. Position 62 is an arginine amide (Arg-62).

Belongs to the cecropin family.

It is found in the secreted. In terms of biological role, sarcotoxins, which are potent bactericidal proteins, are produced in response to injury. They are cytotoxic to both Gram-positive and Gram-negative bacteria. The chain is Sarcotoxin-1A from Sarcophaga peregrina (Flesh fly).